The sequence spans 291 residues: Formamidopyrimidine-DNA glycosylase (291 aa).

Pro-2 serves as the catalytic Schiff-base intermediate with DNA. Glu-3 acts as the Proton donor in catalysis. Lys-61 serves as the catalytic Proton donor; for beta-elimination activity. DNA contacts are provided by His-103, Arg-123, and Arg-165. The FPG-type zinc finger occupies 251–285 (EVYGRGGQACSRCASTIRRDAFMNRSSFSCPACQP). Arg-275 functions as the Proton donor; for delta-elimination activity in the catalytic mechanism.

It belongs to the FPG family. Monomer. The cofactor is Zn(2+).

The enzyme catalyses Hydrolysis of DNA containing ring-opened 7-methylguanine residues, releasing 2,6-diamino-4-hydroxy-5-(N-methyl)formamidopyrimidine.. It catalyses the reaction 2'-deoxyribonucleotide-(2'-deoxyribose 5'-phosphate)-2'-deoxyribonucleotide-DNA = a 3'-end 2'-deoxyribonucleotide-(2,3-dehydro-2,3-deoxyribose 5'-phosphate)-DNA + a 5'-end 5'-phospho-2'-deoxyribonucleoside-DNA + H(+). Its function is as follows. Involved in base excision repair of DNA damaged by oxidation or by mutagenic agents. Acts as a DNA glycosylase that recognizes and removes damaged bases. Has a preference for oxidized purines, such as 7,8-dihydro-8-oxoguanine (8-oxoG). Has AP (apurinic/apyrimidinic) lyase activity and introduces nicks in the DNA strand. Cleaves the DNA backbone by beta-delta elimination to generate a single-strand break at the site of the removed base with both 3'- and 5'-phosphates. This Parafrankia sp. (strain EAN1pec) protein is Formamidopyrimidine-DNA glycosylase.